The following is a 341-amino-acid chain: Putative amino-acid ABC transporter-binding protein YhdW (341 aa).

The N-terminal stretch at 1 to 19 is a signal peptide; the sequence is MKKMMIATLAAASVLLAVA.

It belongs to the bacterial solute-binding protein 3 family.

It localises to the periplasm. Its function is as follows. Probably part of the binding-protein-dependent transport system YdhWXYZ for an amino acid. This chain is Putative amino-acid ABC transporter-binding protein YhdW (yhdW), found in Escherichia coli O157:H7.